Here is a 464-residue protein sequence, read N- to C-terminus: D-2-hydroxyglutarate dehydrogenase (464 aa).

An FAD-binding PCMH-type domain is found at 37–216 (FAPAPSAIVF…VEATMRLERQ (180 aa)). Residues arginine 325, serine 329, and lysine 339 each contribute to the (R)-2-hydroxyglutarate site. The (R)-malate site is built by arginine 325, serine 329, and lysine 339. 2 residues coordinate Zn(2+): histidine 374 and histidine 381. Asparagine 383 lines the (R)-2-hydroxyglutarate pocket. Glutamate 420 lines the Zn(2+) pocket. Residue histidine 421 participates in (R)-2-hydroxyglutarate binding. Histidine 421 is a (R)-malate binding site.

Belongs to the FAD-binding oxidoreductase/transferase type 4 family. As to quaternary structure, homodimer. The cofactor is FAD.

The catalysed reaction is (R)-2-hydroxyglutarate + A = 2-oxoglutarate + AH2. It catalyses the reaction (R)-malate + A = oxaloacetate + AH2. Its activity is regulated as follows. Activated by Zn(2+) ions at low concentrations (10 uM) and inhibited by Zn(2+), Fe(2+) and Ni(2+) at high concentrations (10 mM). In terms of biological role, catalyzes the dehydrogenation of (R)-2-hydroxyglutarate (D-2-hydroxyglutarate or D-2-HG) to 2-oxoglutarate and of (R)-malate (D-malate) to oxaloacetate. Is functionally tied to L-serine biosynthesis, via its coupling with the D-3-phosphoglycerate dehydrogenase SerA, encoded by the adjacent gene in the locus. Is required for the utilization of D-2-hydroxyglutarate as well as D-malate as the sole carbon source for growth of P.stutzeri. Active in vitro with artificial electron acceptors such as 2,6-dichlorophenolindophenol (DCPIP) and appears to couple with electron transfer flavoprotein (ETF) for efficient oxidation of both D-2-hydroxyglutarate and D-malate in vivo. Cannot catalyze the oxidation of L-2-hydroxyglutarate, D-lactate, D-tartrate, D-2-hydroxybutanoate, D-mandelate, D-glycerate and D-phenyllactate. The sequence is that of D-2-hydroxyglutarate dehydrogenase from Stutzerimonas stutzeri (strain A1501) (Pseudomonas stutzeri).